Consider the following 180-residue polypeptide: UPF0149 protein XCV3523 (180 aa).

The protein belongs to the UPF0149 family.

This Xanthomonas euvesicatoria pv. vesicatoria (strain 85-10) (Xanthomonas campestris pv. vesicatoria) protein is UPF0149 protein XCV3523.